The sequence spans 359 residues: Probable NAD(P)H nitroreductase PigM (359 aa).

Belongs to the nitroreductase family. The cofactor is FMN.

It functions in the pathway antibiotic biosynthesis; prodigiosin biosynthesis. In terms of biological role, involved in the biosynthesis of 4-methoxy-2,2'-bipyrrole-5-carbaldehyde (MBC), one of the terminal products involved in the biosynthesis of the red antibiotic prodigiosin (Pig). Catalyzes the oxidation of the hydroxy group of 4-hydroxy-2,2'-bipyrrole-5-methanol (HBM) to yield 4-methoxy-2,2'-bipyrrole-5-carbaldehyde (MBC). This Serratia sp. (strain ATCC 39006) (Prodigiosinella confusarubida) protein is Probable NAD(P)H nitroreductase PigM.